Here is a 122-residue protein sequence, read N- to C-terminus: Large ribosomal subunit protein uL14 (122 aa).

This sequence belongs to the universal ribosomal protein uL14 family. In terms of assembly, part of the 50S ribosomal subunit. Forms a cluster with proteins L3 and L19. In the 70S ribosome, L14 and L19 interact and together make contacts with the 16S rRNA in bridges B5 and B8.

Binds to 23S rRNA. Forms part of two intersubunit bridges in the 70S ribosome. This chain is Large ribosomal subunit protein uL14, found in Stutzerimonas stutzeri (strain A1501) (Pseudomonas stutzeri).